The following is a 439-amino-acid chain: Tol-Pal system protein TolB (439 aa).

The first 22 residues, 1 to 22 (MKKPLRWLAALTALLLPLSALA), serve as a signal peptide directing secretion.

It belongs to the TolB family. As to quaternary structure, the Tol-Pal system is composed of five core proteins: the inner membrane proteins TolA, TolQ and TolR, the periplasmic protein TolB and the outer membrane protein Pal. They form a network linking the inner and outer membranes and the peptidoglycan layer.

It localises to the periplasm. Its function is as follows. Part of the Tol-Pal system, which plays a role in outer membrane invagination during cell division and is important for maintaining outer membrane integrity. This Xanthomonas axonopodis pv. citri (strain 306) protein is Tol-Pal system protein TolB.